Consider the following 101-residue polypeptide: NAD(P)H-quinone oxidoreductase subunit 4L, chloroplastic (101 aa).

Transmembrane regions (helical) follow at residues 2–22 (MLEH…YGLI), 32–52 (MCLE…SDFF), and 61–81 (IFSI…PAIV).

This sequence belongs to the complex I subunit 4L family. NDH is composed of at least 16 different subunits, 5 of which are encoded in the nucleus.

Its subcellular location is the plastid. It is found in the chloroplast thylakoid membrane. It carries out the reaction a plastoquinone + NADH + (n+1) H(+)(in) = a plastoquinol + NAD(+) + n H(+)(out). It catalyses the reaction a plastoquinone + NADPH + (n+1) H(+)(in) = a plastoquinol + NADP(+) + n H(+)(out). In terms of biological role, NDH shuttles electrons from NAD(P)H:plastoquinone, via FMN and iron-sulfur (Fe-S) centers, to quinones in the photosynthetic chain and possibly in a chloroplast respiratory chain. The immediate electron acceptor for the enzyme in this species is believed to be plastoquinone. Couples the redox reaction to proton translocation, and thus conserves the redox energy in a proton gradient. This Manihot esculenta (Cassava) protein is NAD(P)H-quinone oxidoreductase subunit 4L, chloroplastic.